The following is a 397-amino-acid chain: Phosphoglycerate transport regulatory protein PgtC (397 aa).

Positions 1–24 are cleaved as a signal peptide; that stretch reads MFGSCQAYSRELVMATTFSPSATA. The helical transmembrane segment at 102–117 threads the bilayer; sequence TSVAVAVSGFGLLINR.

The protein localises to the cell membrane. Required for pgtP expression, it may act jointly with the PgtA/PgtB signaling proteins. This chain is Phosphoglycerate transport regulatory protein PgtC (pgtC), found in Salmonella typhi.